We begin with the raw amino-acid sequence, 215 residues long: Probable phosphoglycerate mutase GpmB (215 aa).

Substrate is bound by residues 8 to 15, 21 to 22, R58, 82 to 85, 104 to 105, and 151 to 152; these read RHGETQWN, QG, ELDM, RR, and GM. H9 functions as the Tele-phosphohistidine intermediate in the catalytic mechanism. E82 (proton donor/acceptor) is an active-site residue.

The protein belongs to the phosphoglycerate mutase family. GpmB subfamily.

The catalysed reaction is (2R)-2-phosphoglycerate = (2R)-3-phosphoglycerate. The protein operates within carbohydrate degradation; glycolysis; pyruvate from D-glyceraldehyde 3-phosphate: step 3/5. The sequence is that of Probable phosphoglycerate mutase GpmB from Cronobacter sakazakii (strain ATCC BAA-894) (Enterobacter sakazakii).